A 134-amino-acid polypeptide reads, in one-letter code: D-ribose pyranase (134 aa).

The active-site Proton donor is His-20. Residues Asp-28, His-99, and 123–125 (FSN) contribute to the substrate site.

The protein belongs to the RbsD / FucU family. RbsD subfamily. In terms of assembly, homodecamer.

The protein resides in the cytoplasm. It catalyses the reaction beta-D-ribopyranose = beta-D-ribofuranose. It participates in carbohydrate metabolism; D-ribose degradation; D-ribose 5-phosphate from beta-D-ribopyranose: step 1/2. Catalyzes the interconversion of beta-pyran and beta-furan forms of D-ribose. In Staphylococcus carnosus (strain TM300), this protein is D-ribose pyranase.